We begin with the raw amino-acid sequence, 250 residues long: Superoxide dismutase 1 copper chaperone (250 aa).

The 64-residue stretch at 4 to 67 folds into the HMA domain; sequence SFEIVFAVPM…AIQSTGKDAI (64 aa). Positions 15, 18, 229, and 231 each coordinate Cu cation.

Belongs to the CCS1 family. Requires Cu(2+) as cofactor.

The protein resides in the cytoplasm. Functionally, copper chaperone for superoxide dismutase 1 (SOD1). Binds copper ions and delivers them specifically to SOD1. In Debaryomyces hansenii (strain ATCC 36239 / CBS 767 / BCRC 21394 / JCM 1990 / NBRC 0083 / IGC 2968) (Yeast), this protein is Superoxide dismutase 1 copper chaperone (CCS1).